We begin with the raw amino-acid sequence, 433 residues long: Nuclear distribution protein PAC1 (433 aa).

A LisH domain is found at 8–40 (QKDELHRAMLAYLHAAGMHNAYAALQHDAALAD). Positions 57–84 (SVIRLQKKVIDLENRNAALLAELAAAAR) form a coiled coil. WD repeat units follow at residues 103 to 144 (SHRA…RTLK), 146 to 184 (HTKA…TNVK), 188 to 227 (GHDH…CIKT), 230 to 269 (GHAE…TKME), 272 to 336 (GHEH…CLRT), 339 to 378 (GHDN…CTKT), and 381 to 429 (AHSH…QTIK).

Belongs to the WD repeat LIS1/nudF family. Self-associates. Interacts with NDL1 and dynein.

It localises to the cytoplasm. The protein resides in the cytoskeleton. Its subcellular location is the spindle pole. Positively regulates the activity of the minus-end directed microtubule motor protein dynein. Plays a central role in positioning the mitotic spindle at the bud neck during cell division. Targets cytoplasmic dynein to microtubule plus ends, thereby promoting dynein-mediated microtubule sliding along the bud cortex and consequently the movement of the mitotic spindle to the bud neck. This is Nuclear distribution protein PAC1 from Cryptococcus neoformans var. neoformans serotype D (strain B-3501A) (Filobasidiella neoformans).